The chain runs to 176 residues: Cytochrome b (176 aa).

The next 3 helical transmembrane spans lie at 33 to 53 (FGSL…FLAM), 77 to 98 (WLLR…YLHV), and 113 to 133 (WNVG…GYVL). The heme b site is built by histidine 83 and histidine 97.

The protein belongs to the cytochrome b family. The cytochrome bc1 complex contains 11 subunits: 3 respiratory subunits (MT-CYB, CYC1 and UQCRFS1), 2 core proteins (UQCRC1 and UQCRC2) and 6 low-molecular weight proteins (UQCRH/QCR6, UQCRB/QCR7, UQCRQ/QCR8, UQCR10/QCR9, UQCR11/QCR10 and a cleavage product of UQCRFS1). This cytochrome bc1 complex then forms a dimer. It depends on heme b as a cofactor.

It localises to the mitochondrion inner membrane. Functionally, component of the ubiquinol-cytochrome c reductase complex (complex III or cytochrome b-c1 complex) that is part of the mitochondrial respiratory chain. The b-c1 complex mediates electron transfer from ubiquinol to cytochrome c. Contributes to the generation of a proton gradient across the mitochondrial membrane that is then used for ATP synthesis. The sequence is that of Cytochrome b (MT-CYB) from Mormopterus kalinowskii (Kalinowski's mastiff bat).